Consider the following 115-residue polypeptide: Succinate dehydrogenase assembly factor 3, mitochondrial (115 aa).

This sequence belongs to the complex I LYR family. SDHAF3 subfamily. In terms of assembly, interacts with sdh2 within an sdh1-sdh2 subcomplex.

It localises to the mitochondrion matrix. In terms of biological role, plays an essential role in the assembly of succinate dehydrogenase (SDH), an enzyme complex (also referred to as respiratory complex II) that is a component of both the tricarboxylic acid (TCA) cycle and the mitochondrial electron transport chain, and which couples the oxidation of succinate to fumarate with the reduction of ubiquinone (coenzyme Q) to ubiquinol. Promotes maturation of the iron-sulfur protein subunit sdh2 of the SDH catalytic dimer, protecting it from the deleterious effects of oxidants. May act together with SDHAF1. The protein is Succinate dehydrogenase assembly factor 3, mitochondrial of Schizosaccharomyces pombe (strain 972 / ATCC 24843) (Fission yeast).